A 1059-amino-acid polypeptide reads, in one-letter code: Transmembrane protease serine 9 (1059 aa).

At 1-29 (MEPTVADVHLVPRTTKEVPALDAACCRAA) the chain is on the cytoplasmic side. A helical; Signal-anchor for type II membrane protein transmembrane segment spans residues 30–50 (SIGVVATSLVVLTLGVLLAFL). The Extracellular portion of the chain corresponds to 51–1059 (STQGFHVDHT…RGWIGQHIQE (1009 aa)). Residues 153 to 190 (RCPGNSFSCGNSQCVTKVNPECDDQEDCSDGSDEAHCE) enclose the LDL-receptor class A domain. 4 disulfides stabilise this stretch: C154–C166, C161–C180, C174–C189, and C228–C244. In terms of domain architecture, Peptidase S1 1 spans 203-436 (IVGGMEASPG…LRDWILEATT (234 aa)). Residues H243 and D292 each act as charge relay system in the active site. Intrachain disulfides connect C326–C393, C358–C372, and C383–C412. S387 serves as the catalytic Charge relay system. Positions 443–469 (APTMAPAPAAPSTAWPTSPESPVVSTP) are disordered. The 233-residue stretch at 504–736 (VVGGFGAASG…LKGWILEIMS (233 aa)) folds into the Peptidase S1 2 domain. C529 and C545 are oxidised to a cystine. The active-site Charge relay system is the H544. N547 carries an N-linked (GlcNAc...) asparagine glycan. D592 acts as the Charge relay system in catalysis. Intrachain disulfides connect C626–C693, C658–C672, and C683–C712. Residues N638 and N663 are each glycosylated (N-linked (GlcNAc...) asparagine). S687 serves as the catalytic Charge relay system. Positions 758 to 814 (TTAGLTVPGATPSRPTPGAASRVTGQPANSTLSAVSTTARGQTPFPDAPEATTHTQL) are disordered. The segment covering 780–798 (VTGQPANSTLSAVSTTARG) has biased composition (polar residues). The N-linked (GlcNAc...) asparagine glycan is linked to N786. A Peptidase S1 3 domain is found at 827–1058 (IVGGSAAGRG…VRGWIGQHIQ (232 aa)). Disulfide bonds link C853–C869, C949–C1015, C980–C994, and C1005–C1034.

The protein belongs to the peptidase S1 family. In terms of processing, proteolytically cleaved to generate 3 independent serine protease chains. The cleaved chains may remain attached to the membrane thanks to disulfide bonds. It is unclear whether cleavage always takes place. As to expression, expressed in fetal human tissues, such as kidney, liver, lung and brain, and in a variety of tumor cell lines. Weakly expressed in adult tissues including skeletal muscle, liver, placenta and heart.

The protein resides in the cell membrane. With respect to regulation, inhibited by serine protease inhibitors PMSF and 4-(2-aminoethyl)benzenesulfonyl fluoride, but not by EDTA. Functionally, serase-1 and serase-2 are serine proteases that hydrolyze the peptides N-t-Boc-Gln-Ala-Arg-AMC and N-t-Boc-Gln-Gly-Arg-AMC. In contrast, N-t-Boc-Ala-Phe-Lys-AMC and N-t-Boc-Ala-Pro-Ala-AMC are not significantly hydrolyzed. The chain is Transmembrane protease serine 9 (TMPRSS9) from Homo sapiens (Human).